A 1371-amino-acid polypeptide reads, in one-letter code: MTEDIYSLFQKPKNPRDFDAIRIKLASPEKIREWSYGEVKKPETINYRTFKPEPEGLFCAKIFGPIKDWECLCGKYKRMKHKGVICDKCGVEVIQSKVRRERMGHIELAAPVAHIWFVRGVPSKMGLLLDLSVRQLERVIYYEDYIVIDPGDTPLKEKDILTEDEYKKCISQYGNKFKAGMGAEAVRELLKKIDLDIVAQELKEKIEAATSTGIKRKLTKRLKVIEAFKNSGNRPEWMILDIVPVLPPELRPLVPLDGGRFASSDLNDLYRRVINRNNRLKRLMELKAPSVIIRNEKRMLQESVDTLFDNTKRSKALKAGTRRPLKSLSDMIKGKQGRFRQNLLGKRVDYSGRSVIVVGPELDMHQCGLPKSMALELFKPFVFNKLEEKGYATTIKQAKRLVEQERSEVWDALEEVIQEHPVLLNRAPTLHRLGIQAFDPVLVEGKAIKLHPLVCTAFNADFDGDQMAVHVPLSYEAQVEARVLMMSVGNLLSPANGKPIVVPTQDMVLGIYYLTKEKHDAKGAGKVFSDPEEVILAYQCKAVEKHAPIKVKLNGEFVNTTVGRILFREIVPEGVPFQMINKELTKKELGKLIEYIHYNFGKRDTVLFLNKLEKLGFEVATQSGISICIDDMHIPSKKTELIKEAEAQVMEVQRQYAEGLITQGERYNKVIDIWANVTERVADEMMKELGAERGKEFTPEELAERRSFNSIFMMADSGARGSIAQIRQLAGMRGLMAKPSGEIIETPITANFREGLTPLQYFISTHGARKGLADTALKTANAGYLTRRLVDVAQDIFLIEHDCGTKDGIYITALIEGGEIVMPLEERIYGRTLAEDIKDPLTGEIIAKRDTVIDQALAKKIVDSGIDRLKIRSVLTCRTKFGVCSKCYGMDLARSEPVEIGEAIGVIAAQSIGEPGTQLTMRTFHIGGAATKIVEQAVLEAKGSGTVRFKNIHYVERKDGSLVVLNRNAMIVITDSSGREREKYNLVYGAKIIVKEGQIVESGQRLAEWDAYTTPIITEIGGKIALGDMVEGVTFKEETDPTTGLSHKIIIDYPATYRPRVTIKDKDGKTAKLPSGTAARYLLPAGAILVVDKGDIVEPGDILAKIPRETIKTKDITGGLPRVAELFEARRPREAAIVSEIDGIVEFKGSQKGSRVIVVRGADETREYLIPKGKHVIVHDGDWVKAGEPLIDGSINPHSILEILGPTELQRYLVDEIQKVYRLQGVSIHDKHIEVIVRQMMKKVRIEDPGDTSFLIGDEVDRFIFIEENEKVIARGGRPAQARPLLLGITKAALSTESWVSAASFQETTRVLTDAAIEARIDELRGLKENVIMGRIIPAGTGSPVYKDTLIKGEFYSMQIEHFSEESIEEN.

The Zn(2+) site is built by Cys71, Cys73, Cys86, and Cys89. Positions 461, 463, and 465 each coordinate Mg(2+). Zn(2+)-binding residues include Cys803, Cys877, Cys884, and Cys887.

It belongs to the RNA polymerase beta' chain family. In terms of assembly, the RNAP catalytic core consists of 2 alpha, 1 beta, 1 beta' and 1 omega subunit. When a sigma factor is associated with the core the holoenzyme is formed, which can initiate transcription. Mg(2+) is required as a cofactor. Requires Zn(2+) as cofactor.

It catalyses the reaction RNA(n) + a ribonucleoside 5'-triphosphate = RNA(n+1) + diphosphate. In terms of biological role, DNA-dependent RNA polymerase catalyzes the transcription of DNA into RNA using the four ribonucleoside triphosphates as substrates. The chain is DNA-directed RNA polymerase subunit beta' from Thermodesulfovibrio yellowstonii (strain ATCC 51303 / DSM 11347 / YP87).